We begin with the raw amino-acid sequence, 169 residues long: MKPKAVLIGPPGAGKSTIGRRLAQALELELVDTDAEIERTTGRTIPEIFTHDGEPRFREIEESVVRDALQATDGIVSLGGGAILSDRTRELLQGHTVIYLEISVAEGLRRTGANNHRPLLAGGDPKVKYQELMRRRRPLYRRSATIRIRTDGRSPARVVGQLVSKLQDK.

An ATP-binding site is contributed by 12–17 (GAGKST). Serine 16 lines the Mg(2+) pocket. Residues aspartate 34, arginine 58, and glycine 80 each coordinate substrate. Arginine 117 serves as a coordination point for ATP. Substrate is bound at residue arginine 136.

The protein belongs to the shikimate kinase family. As to quaternary structure, monomer. Mg(2+) is required as a cofactor.

The protein resides in the cytoplasm. The catalysed reaction is shikimate + ATP = 3-phosphoshikimate + ADP + H(+). The protein operates within metabolic intermediate biosynthesis; chorismate biosynthesis; chorismate from D-erythrose 4-phosphate and phosphoenolpyruvate: step 5/7. Catalyzes the specific phosphorylation of the 3-hydroxyl group of shikimic acid using ATP as a cosubstrate. This is Shikimate kinase from Rhodococcus erythropolis (strain PR4 / NBRC 100887).